The chain runs to 182 residues: MMSGVPPLKPSRSFLPQDSGPMLHRSPSGAKRKIRQKREEASRPSPFLSPSSSSSQTSISPTPTETSSNYRSLVDSGDYQSILPDFDPSFVPVPTPRLSVPFSASMSTLELSSSTLSSPVTAPAPPPPPTSKPTVEVHPMPTDERSPSMASSLNGSIDIDIYKPKPPVPIKPKGLRIDHLNR.

2 disordered regions span residues M1–L73 and S105–R182. Low complexity-rich tracts occupy residues R43–S68 and S105–T121. Pro residues predominate over residues A122 to S131.

This is an uncharacterized protein from Caenorhabditis elegans.